The primary structure comprises 352 residues: UDP-N-acetylglucosamine--N-acetylmuramyl-(pentapeptide) pyrophosphoryl-undecaprenol N-acetylglucosamine transferase 2 (352 aa).

UDP-N-acetyl-alpha-D-glucosamine-binding positions include 11-13, Arg164, Ser194, and Gln289; that span reads SAG.

The protein belongs to the glycosyltransferase 28 family. MurG subfamily.

It is found in the cell membrane. It catalyses the reaction di-trans,octa-cis-undecaprenyl diphospho-N-acetyl-alpha-D-muramoyl-L-alanyl-D-glutamyl-meso-2,6-diaminopimeloyl-D-alanyl-D-alanine + UDP-N-acetyl-alpha-D-glucosamine = di-trans,octa-cis-undecaprenyl diphospho-[N-acetyl-alpha-D-glucosaminyl-(1-&gt;4)]-N-acetyl-alpha-D-muramoyl-L-alanyl-D-glutamyl-meso-2,6-diaminopimeloyl-D-alanyl-D-alanine + UDP + H(+). The protein operates within cell wall biogenesis; peptidoglycan biosynthesis. Cell wall formation. Catalyzes the transfer of a GlcNAc subunit on undecaprenyl-pyrophosphoryl-MurNAc-pentapeptide (lipid intermediate I) to form undecaprenyl-pyrophosphoryl-MurNAc-(pentapeptide)GlcNAc (lipid intermediate II). This chain is UDP-N-acetylglucosamine--N-acetylmuramyl-(pentapeptide) pyrophosphoryl-undecaprenol N-acetylglucosamine transferase 2, found in Bacillus anthracis.